The chain runs to 217 residues: UPF0323 lipoprotein HPP12_0232 (217 aa).

The N-terminal stretch at 1-27 is a signal peptide; the sequence is MKKPYRKISDYAIVGGLSALVMVSIVG. A lipid anchor (N-palmitoyl cysteine) is attached at Cys28. Residue Cys28 is the site of S-diacylglycerol cysteine attachment. Polar residues predominate over residues 160–171; it reads QRTYKSPQAYQR. Residues 160–217 are disordered; sequence QRTYKSPQAYQRSQNSFSKSAPSASSMGTASKGQSGFFGSSRPTSSPAISSGTRGFNS. Low complexity predominate over residues 172–185; the sequence is SQNSFSKSAPSASS. The span at 186-197 shows a compositional bias: polar residues; the sequence is MGTASKGQSGFF. Low complexity predominate over residues 199–210; it reads SSRPTSSPAISS.

Belongs to the UPF0323 family.

Its subcellular location is the cell membrane. The chain is UPF0323 lipoprotein HPP12_0232 from Helicobacter pylori (strain P12).